The sequence spans 361 residues: Phosphoserine aminotransferase (361 aa).

Arg43 is an L-glutamate binding site. Pyridoxal 5'-phosphate is bound by residues 77–78 (AS), Trp103, Thr153, Asp173, and Gln196. Lys197 carries the N6-(pyridoxal phosphate)lysine modification. Residue 238 to 239 (NT) participates in pyridoxal 5'-phosphate binding.

It belongs to the class-V pyridoxal-phosphate-dependent aminotransferase family. SerC subfamily. As to quaternary structure, homodimer. Pyridoxal 5'-phosphate is required as a cofactor.

It localises to the cytoplasm. The enzyme catalyses O-phospho-L-serine + 2-oxoglutarate = 3-phosphooxypyruvate + L-glutamate. It carries out the reaction 4-(phosphooxy)-L-threonine + 2-oxoglutarate = (R)-3-hydroxy-2-oxo-4-phosphooxybutanoate + L-glutamate. Its pathway is amino-acid biosynthesis; L-serine biosynthesis; L-serine from 3-phospho-D-glycerate: step 2/3. The protein operates within cofactor biosynthesis; pyridoxine 5'-phosphate biosynthesis; pyridoxine 5'-phosphate from D-erythrose 4-phosphate: step 3/5. Catalyzes the reversible conversion of 3-phosphohydroxypyruvate to phosphoserine and of 3-hydroxy-2-oxo-4-phosphonooxybutanoate to phosphohydroxythreonine. The protein is Phosphoserine aminotransferase of Pseudomonas syringae pv. tomato (strain ATCC BAA-871 / DC3000).